The sequence spans 338 residues: MVKKVAVLGAGSWGSILANMLVQNGNDVVAWTNMEEQAKELNEQHSNEHYVPGFKYDERLVATTDLEVALKDVDAVLFVVPTKVMRLVAQQMVEVLKKTGQKPIIVHASKGLELGTHKRLSEVLAEEIPSELRQAIVVLSGPSHAEEVAKQDLTLVTAASSDLASAEAVQKLFMNNYFRVYTNDDIVGVEMGAALKNVIAIGAGALHGLGYGDDAKAALITRGLAEISRLGVAFGANPLTFIGLSGVGDLIVTATSVHSRNWRAGNELGQGMKLDEVIDTMGMVIEGVPSTKAAYELAQQKNIEMPITEAIYDVLYNEKGVKEAIDELMHRDGRSELE.

The NADPH site is built by Ser-12, Trp-13, and Lys-110. Sn-glycerol 3-phosphate contacts are provided by Lys-110, Gly-141, and Ser-143. NADPH is bound at residue Ala-145. Residues Lys-196, Asp-249, Ser-259, Arg-260, and Asn-261 each contribute to the sn-glycerol 3-phosphate site. Lys-196 acts as the Proton acceptor in catalysis. Arg-260 contacts NADPH. NADPH-binding residues include Val-284 and Glu-286.

This sequence belongs to the NAD-dependent glycerol-3-phosphate dehydrogenase family.

Its subcellular location is the cytoplasm. It catalyses the reaction sn-glycerol 3-phosphate + NAD(+) = dihydroxyacetone phosphate + NADH + H(+). The catalysed reaction is sn-glycerol 3-phosphate + NADP(+) = dihydroxyacetone phosphate + NADPH + H(+). Its pathway is membrane lipid metabolism; glycerophospholipid metabolism. Catalyzes the reduction of the glycolytic intermediate dihydroxyacetone phosphate (DHAP) to sn-glycerol 3-phosphate (G3P), the key precursor for phospholipid synthesis. The protein is Glycerol-3-phosphate dehydrogenase [NAD(P)+] of Pediococcus pentosaceus (strain ATCC 25745 / CCUG 21536 / LMG 10740 / 183-1w).